We begin with the raw amino-acid sequence, 116 residues long: Putative pterin-4-alpha-carbinolamine dehydratase 1 (116 aa).

Belongs to the pterin-4-alpha-carbinolamine dehydratase family.

The enzyme catalyses (4aS,6R)-4a-hydroxy-L-erythro-5,6,7,8-tetrahydrobiopterin = (6R)-L-erythro-6,7-dihydrobiopterin + H2O. The chain is Putative pterin-4-alpha-carbinolamine dehydratase 1 from Gloeobacter violaceus (strain ATCC 29082 / PCC 7421).